A 426-amino-acid chain; its full sequence is Serine protease HTRA2, mitochondrial (426 aa).

The N-terminal 30 residues, 1-30, are a transit peptide targeting the mitochondrion; that stretch reads MALRGSHRLDDFIRRCSALTLFHSQAPSRR. The segment at 30–59 is disordered; it reads RVSHCGRDRRQQQDPPGQGRQEQQESGGGH. Residues 31 to 78 constitute a propeptide that is removed on maturation; that stretch reads VSHCGRDRRQQQDPPGQGRQEQQESGGGHWSRFGWRSLIRFFVPFSLG. The span at 42 to 54 shows a compositional bias: low complexity; the sequence is QDPPGQGRQEQQE. A helical membrane pass occupies residues 68–86; that stretch reads LIRFFVPFSLGAVASSLVI. Residues 79–82 carry the IAP-binding motif; that stretch reads AVAS. The interval 143–306 is serine protease; sequence SNGSGFIIEQ…IPIDYVKVFL (164 aa). Catalysis depends on charge relay system residues H161, D193, and S270. A PDZ domain is found at 329 to 414; that stretch reads MGITMLTLTP…HLDIVILRGV (86 aa).

It belongs to the peptidase S1C family. As to quaternary structure, interacts with th/DIAP1 (via BIR 2 domain).

Its subcellular location is the mitochondrion intermembrane space. It localises to the mitochondrion membrane. The enzyme catalyses Cleavage of non-polar aliphatic amino-acids at the P1 position, with a preference for Val, Ile and Met. At the P2 and P3 positions, Arg is selected most strongly with a secondary preference for other hydrophilic residues.. Serine protease that shows proteolytic activity against a non-specific substrate beta-casein. Promotes or induces cell death either by direct binding to and inhibition of BIRC proteins (also called inhibitor of apoptosis proteins, IAPs), leading to an increase in caspase activity, or by a BIRC inhibition-independent, caspase-independent and serine protease activity-dependent mechanism. Can antagonize antiapoptotic activity of th/Diap1 by directly inducing the degradation of th/Diap1. This Drosophila ananassae (Fruit fly) protein is Serine protease HTRA2, mitochondrial.